The primary structure comprises 309 residues: Methyltransferase AacuQ (309 aa).

Positions 57–149 are methyltransferase domain; sequence DVGAGNGPYA…QLRPGGTFAC (93 aa).

The protein belongs to the methyltransferase superfamily.

It participates in secondary metabolite biosynthesis. Its function is as follows. Methyltransferase; part of the gene cluster that mediates the biosynthesis of the tetrahydroxanthone dimer secalonic acid D. The pathway begins with the synthesis of atrochrysone thioester by the polyketide synthase AacuL. The atrochrysone carboxyl ACP thioesterase AacuM then breaks the thioester bond and releases the atrochrysone carboxylic acid from AacuL. Atrochrysone carboxylic acid is decarboxylated by the decarboxylase AacuI, and oxidized by the anthrone oxygenase AacuG to yield emodin. Emodin is then reduced to emodin hydroquinone by a yet unidentified oxidoreductase. A-ring reduction by the short chain dehydrogenase AacuN, dehydration by the scytalone dehydratase-like protein AacuK and probable spontaneous re-oxidation, results in overall deoxygenation to chrysophanol. Baeyer-Villiger oxidation by the Baeyer-Villiger monooxygenase (BVMO) AacuH then yields monodictyphenone. Monodictyphenone is transformed into compounds with the tetrahydroxanthone skeleton via methylesterification by the methyltransferase AacuQ, followed by the action of the flavin-dependent monooxygenase AacuC, the isomerase AacuP, and the short chain dehydrogenase/reductase AacuF or AacuD. AacuF and AacuD should accept the same compound as a substrate but perform the ketoreduction with a different stereoselectivity, thus yielding blennolides B and A, respectively. In the final step of the biosynthesis, the cytochrome P450 monooxygenase AacuE accepts blennolide B and/or blennolide A to conduct the dimerization reaction to furnish the tetrahydroxanthone dimers, secalonic acids D, B, and F. The polypeptide is Methyltransferase AacuQ (Aspergillus aculeatus (strain ATCC 16872 / CBS 172.66 / WB 5094)).